The sequence spans 426 residues: Actin-like protein 6B (426 aa).

Residues 39–82 (TTVGLLAAEEGGGLELEGEKEKKGKIFHIDTNALHVPRDGAEVM) form an essential for mediating its function in dendritic development; may contribute to neuronal-specific targeting region.

This sequence belongs to the actin family. As to quaternary structure, component of the multiprotein chromatin-remodeling complexes SWI/SNF: SWI/SNF-A (BAF), SWI/SNF-B (PBAF) and related complexes. The canonical complex contains a catalytic subunit (either SMARCA4/BRG1/BAF190A or SMARCA2/BRM/BAF190B) and at least SMARCE1, ACTL6A/BAF53, SMARCC1/BAF155, SMARCC2/BAF170, and SMARCB1/SNF5/BAF47. Other subunits specific to each of the complexes may also be present permitting several possible combinations developmentally and tissue specific. Component of the BAF complex, which includes at least actin (ACTB), ARID1A/BAF250A, ARID1B/BAF250B, SMARCA2/BRM, SMARCA4/BRG1/BAF190A, ACTL6A/BAF53, ACTL6B/BAF53B, SMARCE1/BAF57, SMARCC1/BAF155, SMARCC2/BAF170, SMARCB1/SNF5/INI1, and one or more SMARCD1/BAF60A, SMARCD2/BAF60B, or SMARCD3/BAF60C. Component of neuron-specific chromatin remodeling complex (nBAF complex) composed of at least, ARID1A/BAF250A or ARID1B/BAF250B, SMARCD1/BAF60A or SMARCD2/BAF60B or SMARCD3/BAF60C, SMARCA2/BRM/BAF190B, SMARCA4/BRG1/BAF190A, SMARCB1/BAF47, SMARCC1/BAF155, SMARCE1/BAF57, SMARCC2/BAF170, DPF1/BAF45B, DPF3/BAF45C, ACTL6B/BAF53B and actin (ACTB). Note that the nBAF complex is polymorphic in regard to the ATPase, SMARCA2 and SMARCA4 occupying mutually exclusive positions. May be a component of the SWI/SNF-B (PBAF) chromatin remodeling complex, at least composed of SMARCA4/BRG1, SMARCB1/BAF47/SNF5, ACTL6A/BAF53A or ACTL6B/BAF53B, SMARCE1/BAF57, SMARCD1/BAF60A, SMARCD2/BAF60B, perhaps SMARCD3/BAF60C, SMARCC1/BAF155, SMARCC2/BAF170, PBRM1/BAF180, ARID2/BAF200 and actin.

It localises to the nucleus. Involved in transcriptional activation and repression of select genes by chromatin remodeling (alteration of DNA-nucleosome topology). Component of SWI/SNF chromatin remodeling complexes that carry out key enzymatic activities, changing chromatin structure by altering DNA-histone contacts within a nucleosome in an ATP-dependent manner. Belongs to the neuron-specific chromatin remodeling complex (nBAF complex), as such plays a role in remodeling mononucleosomes in an ATP-dependent fashion, and is required for postmitotic neural development and dendritic outgrowth. During neural development a switch from a stem/progenitor to a postmitotic chromatin remodeling mechanism occurs as neurons exit the cell cycle and become committed to their adult state. The transition from proliferating neural stem/progenitor cells to postmitotic neurons requires a switch in subunit composition of the npBAF and nBAF complexes. As neural progenitors exit mitosis and differentiate into neurons, npBAF complexes which contain ACTL6A/BAF53A and PHF10/BAF45A, are exchanged for homologous alternative ACTL6B/BAF53B and DPF1/BAF45B or DPF3/BAF45C subunits in neuron-specific complexes (nBAF). The npBAF complex is essential for the self-renewal/proliferative capacity of the multipotent neural stem cells. The nBAF complex along with CREST plays a role regulating the activity of genes essential for dendrite growth. ACTL6B/BAF53B is not essential for assembly of the nBAF complex but is required for targeting the complex and CREST to the promoter of genes essential for dendritic growth. Essential for neuronal maturation and dendrite development. This chain is Actin-like protein 6B (ACTL6B), found in Bos taurus (Bovine).